The chain runs to 486 residues: Malonate-semialdehyde dehydrogenase 2 (486 aa).

Residues phenylalanine 154, lysine 178, glutamate 181, arginine 182, and serine 231 each coordinate NAD(+). Cysteine 286 functions as the Nucleophile in the catalytic mechanism. Position 386 (glutamate 386) interacts with NAD(+).

Belongs to the aldehyde dehydrogenase family. IolA subfamily. As to quaternary structure, homotetramer.

The enzyme catalyses 3-oxopropanoate + NAD(+) + CoA + H2O = hydrogencarbonate + acetyl-CoA + NADH + H(+). The catalysed reaction is 2-methyl-3-oxopropanoate + NAD(+) + CoA + H2O = propanoyl-CoA + hydrogencarbonate + NADH + H(+). It functions in the pathway polyol metabolism; myo-inositol degradation into acetyl-CoA; acetyl-CoA from myo-inositol: step 7/7. Catalyzes the oxidation of malonate semialdehyde (MSA) and methylmalonate semialdehyde (MMSA) into acetyl-CoA and propanoyl-CoA, respectively. Is involved in a myo-inositol catabolic pathway. Bicarbonate, and not CO2, is the end-product of the enzymatic reaction. This is Malonate-semialdehyde dehydrogenase 2 from Oceanobacillus iheyensis (strain DSM 14371 / CIP 107618 / JCM 11309 / KCTC 3954 / HTE831).